A 200-amino-acid chain; its full sequence is Vacuolar iron transporter homolog 3 (200 aa).

Residues 1-31 lie on the Cytoplasmic side of the membrane; that stretch reads MESHNTLNLDMEKDQEKAFDYSKRAQWLRAA. The helical transmembrane segment at 32-52 threads the bilayer; the sequence is VLGANDGLVSTASLMMGVGAV. The Vacuolar segment spans residues 53-59; the sequence is KQNVKIM. The helical transmembrane segment at 60–80 threads the bilayer; it reads ILTGFAGLVAGACSMAIGEFV. Topologically, residues 81–113 are cytoplasmic; the sequence is SVYSQYDIEVAQMKRETGGEIEKEKLPSPTQAA. A helical transmembrane segment spans residues 114–134; it reads AASALAFSLGAMVPLLAAAFV. Topologically, residues 135–140 are vacuolar; the sequence is KEYKVR. Residues 141–161 traverse the membrane as a helical segment; that stretch reads IGAIVAAVTLALVMFGWLGAV. At 162 to 173 the chain is on the cytoplasmic side; sequence LGKAPVVKSSLR. A helical membrane pass occupies residues 174-194; it reads VLVGGWLAMAITYGFTKLIGS. At 195–200 the chain is on the vacuolar side; the sequence is HSHMYV.

The protein belongs to the CCC1 family.

It is found in the vacuole membrane. It carries out the reaction Fe(2+)(in) = Fe(2+)(out). In terms of biological role, probable vacuolar iron transporter that may be involved in the regulation of iron distribution throughout the plant. The protein is Vacuolar iron transporter homolog 3 of Arabidopsis thaliana (Mouse-ear cress).